The following is a 359-amino-acid chain: 3-dehydroquinate synthase (359 aa).

NAD(+) is bound by residues Asp-70–Lys-75, Gly-105–Asp-109, Thr-129–Thr-130, Lys-142, Lys-151, and Phe-169–Thr-172. Residues Glu-184, His-247, and His-264 each coordinate Zn(2+).

It belongs to the sugar phosphate cyclases superfamily. Dehydroquinate synthase family. It depends on Co(2+) as a cofactor. Zn(2+) is required as a cofactor. NAD(+) serves as cofactor.

Its subcellular location is the cytoplasm. The enzyme catalyses 7-phospho-2-dehydro-3-deoxy-D-arabino-heptonate = 3-dehydroquinate + phosphate. Its pathway is metabolic intermediate biosynthesis; chorismate biosynthesis; chorismate from D-erythrose 4-phosphate and phosphoenolpyruvate: step 2/7. In terms of biological role, catalyzes the conversion of 3-deoxy-D-arabino-heptulosonate 7-phosphate (DAHP) to dehydroquinate (DHQ). The sequence is that of 3-dehydroquinate synthase from Francisella tularensis subsp. holarctica (strain OSU18).